The primary structure comprises 268 residues: Tryptophan synthase alpha chain (268 aa).

Active-site proton acceptor residues include Glu-49 and Asp-60.

This sequence belongs to the TrpA family. Tetramer of two alpha and two beta chains.

The catalysed reaction is (1S,2R)-1-C-(indol-3-yl)glycerol 3-phosphate + L-serine = D-glyceraldehyde 3-phosphate + L-tryptophan + H2O. Its pathway is amino-acid biosynthesis; L-tryptophan biosynthesis; L-tryptophan from chorismate: step 5/5. The alpha subunit is responsible for the aldol cleavage of indoleglycerol phosphate to indole and glyceraldehyde 3-phosphate. The sequence is that of Tryptophan synthase alpha chain from Dechloromonas aromatica (strain RCB).